A 209-amino-acid chain; its full sequence is MFFEIIGMIIIAYLLGSIPTGLWIGKYIYHKDIRKLGSGNIGTTNTFRTLGFKAGVVVLFIDILKGTLAASQPYFLGISGTVNPLLIGLFASLGHTVSIFDNFHGGKAVATSAGILLAYNPLLFVVACLIFIFVLCLTSMVSAASMVGISAIFIIALFIHAWILAIVAGILTGVVFYRHRSNIHRILSGKESMVSFGLGYYLREKKQNK.

The next 5 helical transmembrane spans lie at 5 to 25, 50 to 70, 74 to 94, 115 to 135, and 151 to 171; these read IIGMIIIAYLLGSIPTGLWIG, LGFKAGVVVLFIDILKGTLAA, YFLGISGTVNPLLIGLFASLG, ILLAYNPLLFVVACLIFIFVL, and AIFIIALFIHAWILAIVAGIL.

The protein belongs to the PlsY family. Probably interacts with PlsX.

It localises to the cell membrane. It carries out the reaction an acyl phosphate + sn-glycerol 3-phosphate = a 1-acyl-sn-glycero-3-phosphate + phosphate. The protein operates within lipid metabolism; phospholipid metabolism. Its function is as follows. Catalyzes the transfer of an acyl group from acyl-phosphate (acyl-PO(4)) to glycerol-3-phosphate (G3P) to form lysophosphatidic acid (LPA). This enzyme utilizes acyl-phosphate as fatty acyl donor, but not acyl-CoA or acyl-ACP. This is Glycerol-3-phosphate acyltransferase from Limosilactobacillus reuteri (strain DSM 20016) (Lactobacillus reuteri).